Consider the following 207-residue polypeptide: Nitrophorin-1 (207 aa).

An N-terminal signal peptide occupies residues 1 to 23 (MKSYTALLAVAILCLFAAVGVSG). Cystine bridges form between C25–C145 and C64–C194. H82 contributes to the heme binding site.

The protein belongs to the calycin superfamily. Nitrophorin family. As to expression, salivary gland (at protein level).

It localises to the secreted. Heme-based protein that deliver nitric oxide gas (NO) to the victim while feeding, resulting in vasodilation and inhibition of platelet aggregation. Reversibly binds nitric oxide (NO). Also binds tightly to histamine, which is released by the host to induce wound healing. In Rhodnius prolixus (Triatomid bug), this protein is Nitrophorin-1.